The chain runs to 208 residues: N-(5'-phosphoribosyl)anthranilate isomerase (208 aa).

Belongs to the TrpF family.

The enzyme catalyses N-(5-phospho-beta-D-ribosyl)anthranilate = 1-(2-carboxyphenylamino)-1-deoxy-D-ribulose 5-phosphate. The protein operates within amino-acid biosynthesis; L-tryptophan biosynthesis; L-tryptophan from chorismate: step 3/5. This Nitrosospira multiformis (strain ATCC 25196 / NCIMB 11849 / C 71) protein is N-(5'-phosphoribosyl)anthranilate isomerase.